The sequence spans 325 residues: Probable NADH kinase (325 aa).

This sequence belongs to the NAD kinase family. As to quaternary structure, homodimer.

It is found in the cytoplasm. The catalysed reaction is NADH + ATP = ADP + NADPH + H(+). In terms of biological role, key source of the cellular reductant NADPH which is an important antioxidant factor. This is Probable NADH kinase from Oryza sativa subsp. japonica (Rice).